We begin with the raw amino-acid sequence, 496 residues long: Alanine aminotransferase 1 (496 aa).

Position 2 is an N-acetylalanine (A2). At T22 the chain carries Phosphothreonine. Residue K314 is modified to N6-(pyridoxal phosphate)lysine.

It belongs to the class-I pyridoxal-phosphate-dependent aminotransferase family. Alanine aminotransferase subfamily. Homodimer. Pyridoxal 5'-phosphate serves as cofactor.

The protein localises to the cytoplasm. The enzyme catalyses L-alanine + 2-oxoglutarate = pyruvate + L-glutamate. It functions in the pathway amino-acid degradation; L-alanine degradation via transaminase pathway; pyruvate from L-alanine: step 1/1. Functionally, catalyzes the reversible transamination between alanine and 2-oxoglutarate to form pyruvate and glutamate. Participates in cellular nitrogen metabolism and also in liver gluconeogenesis starting with precursors transported from skeletal muscles. This chain is Alanine aminotransferase 1 (GPT), found in Bos taurus (Bovine).